The primary structure comprises 338 residues: Ketol-acid reductoisomerase (NADP(+)) (338 aa).

Residues 1–181 (MKVFYDKDAD…GGGRAGIIET (181 aa)) enclose the KARI N-terminal Rossmann domain. NADP(+) is bound by residues 24–27 (YGSQ), R47, and S52. H107 is an active-site residue. G133 is an NADP(+) binding site. Positions 182–327 (NFREETETDL…AKLRAMMPWI (146 aa)) constitute a KARI C-terminal knotted domain. The Mg(2+) site is built by D190, E194, E226, and E230. Position 251 (S251) interacts with substrate.

This sequence belongs to the ketol-acid reductoisomerase family. Requires Mg(2+) as cofactor.

It catalyses the reaction (2R)-2,3-dihydroxy-3-methylbutanoate + NADP(+) = (2S)-2-acetolactate + NADPH + H(+). The catalysed reaction is (2R,3R)-2,3-dihydroxy-3-methylpentanoate + NADP(+) = (S)-2-ethyl-2-hydroxy-3-oxobutanoate + NADPH + H(+). It participates in amino-acid biosynthesis; L-isoleucine biosynthesis; L-isoleucine from 2-oxobutanoate: step 2/4. It functions in the pathway amino-acid biosynthesis; L-valine biosynthesis; L-valine from pyruvate: step 2/4. Its function is as follows. Involved in the biosynthesis of branched-chain amino acids (BCAA). Catalyzes an alkyl-migration followed by a ketol-acid reduction of (S)-2-acetolactate (S2AL) to yield (R)-2,3-dihydroxy-isovalerate. In the isomerase reaction, S2AL is rearranged via a Mg-dependent methyl migration to produce 3-hydroxy-3-methyl-2-ketobutyrate (HMKB). In the reductase reaction, this 2-ketoacid undergoes a metal-dependent reduction by NADPH to yield (R)-2,3-dihydroxy-isovalerate. This is Ketol-acid reductoisomerase (NADP(+)) from Cupriavidus necator (strain ATCC 17699 / DSM 428 / KCTC 22496 / NCIMB 10442 / H16 / Stanier 337) (Ralstonia eutropha).